We begin with the raw amino-acid sequence, 1578 residues long: E3 ubiquitin-protein ligase HECW2 (1578 aa).

At serine 48 the chain carries Phosphoserine. The C2 domain maps to 171–298; that stretch reads MEGGASGSLH…LERQAGDQML (128 aa). 2 disordered regions span residues 341–453 and 496–802; these read HTVN…FPTD and IDDG…PSVR. The span at 386 to 406 shows a compositional bias: polar residues; sequence RTSSTLEIDTEDLISTSSRNS. Basic and acidic residues predominate over residues 518 to 532; it reads ASIHETASLEERLEN. Polar residues predominate over residues 559 to 576; that stretch reads SADQGSTELCSSQEVDQP. Residues 577-593 show a composition bias toward low complexity; it reads TSGADAGASDTSGGSRR. Composition is skewed to polar residues over residues 597 to 614, 643 to 664, and 688 to 708; these read ETESLDQGSEPSQVSSET, SSCNESVTTQLSSVETRCSSLE, and PTSSGPAEGSQESVCTPSSLP. Composition is skewed to low complexity over residues 721–735, 746–755, and 769–782; these read AAEAAALSEQGELGE, AAAAAPAAAA, and AQGACEGATAQEEG. The interaction with TP73 stretch occupies residues 737-1074; the sequence is WQRRGSLEGA…PRPSSTFNTV (338 aa). Residues 813 to 846 enclose the WW 1 domain; that stretch reads EALPPNWEARIDSHGRIFYVDHVNRTTTWQRPTA. Residues 853 to 880 are a coiled coil; it reads LQRSNSIQQMEQLNRRYQSIRRTMTNER. A phosphoserine mark is found at serine 858 and serine 915. Residues 991–1024 form the WW 2 domain; sequence LELPRGWEMKHDHQGKAFFVDHNSRTTTFIDPRL. Disordered stretches follow at residues 1030-1075 and 1167-1193; these read RPTS…NTVS and CQSPRGSPVSSPQNSPGTQRANARAPA. Residues 1037–1046 are compositionally biased toward basic residues; sequence HRQHLTRQRS. Positions 1167–1187 are enriched in polar residues; it reads CQSPRGSPVSSPQNSPGTQRA. Serine 1181 carries the post-translational modification Phosphoserine. In terms of domain architecture, HECT spans 1243–1578; sequence SRKDLQRNKL…VEETSTFGLE (336 aa). The Glycyl thioester intermediate role is filled by cysteine 1546.

As to quaternary structure, interacts with TP73. Interacts with FZR1.

The protein resides in the cytoplasm. It localises to the cytoskeleton. It is found in the spindle. It carries out the reaction S-ubiquitinyl-[E2 ubiquitin-conjugating enzyme]-L-cysteine + [acceptor protein]-L-lysine = [E2 ubiquitin-conjugating enzyme]-L-cysteine + N(6)-ubiquitinyl-[acceptor protein]-L-lysine.. It functions in the pathway protein modification; protein ubiquitination. In terms of biological role, E3 ubiquitin-protein ligase that mediates ubiquitination of TP73. Acts to stabilize TP73 and enhance activation of transcription by TP73. Involved in the regulation of mitotic metaphase/anaphase transition. This is E3 ubiquitin-protein ligase HECW2 (Hecw2) from Mus musculus (Mouse).